A 141-amino-acid polypeptide reads, in one-letter code: Putative pre-16S rRNA nuclease (141 aa).

The protein belongs to the YqgF nuclease family.

Its subcellular location is the cytoplasm. Functionally, could be a nuclease involved in processing of the 5'-end of pre-16S rRNA. This Coxiella burnetii (strain CbuG_Q212) (Coxiella burnetii (strain Q212)) protein is Putative pre-16S rRNA nuclease.